The following is a 248-amino-acid chain: Mannose-binding protein C (248 aa).

A signal peptide spans 1–20; it reads MSLFPSLPLLLLSMVAASYS. In terms of domain architecture, Collagen-like spans 42 to 99; the sequence is GINGFPGKDGRDGTKGEKGEPGQGLRGLQGPPGKLGPPGNPGPSGSPGPKGQKGDPGK. The disordered stretch occupies residues 43 to 113; the sequence is INGFPGKDGR…DSSLAASERK (71 aa). Position 47 is a hydroxyproline (proline 47). Residues 49–61 show a composition bias toward basic and acidic residues; it reads KDGRDGTKGEKGE. Residues proline 73, proline 79, proline 82, and proline 88 each carry the hydroxyproline modification. A compositionally biased stretch (pro residues) spans 75–87; sequence KLGPPGNPGPSGS. Residues 93–102 show a composition bias toward basic and acidic residues; it reads QKGDPGKSPD. Residues 112–130 adopt a coiled-coil conformation; sequence RKALQTEMARIKKWLTFSL. Positions 134 to 245 constitute a C-type lectin domain; it reads VGNKFFLTNG…CSTSHLAVCE (112 aa). 2 disulfides stabilise this stretch: cysteine 155–cysteine 244 and cysteine 222–cysteine 236.

In terms of assembly, oligomeric complex of 3 or more homotrimers. Interacts with MASP1 and MASP2. Interacts with MEP1A and MEP1B and may inhibit their catalytic activity. Interacts with CR1 (via Sushi 24 and Sushi 25 domains). (Microbial infection) Interacts with SARS coronavirus-2/SARS-CoV-2 Spike glycoprotein homotrimer; the interaction is calcium-dependent and modulated by Spike glycoprotein glycosylation state. As to expression, plasma protein produced mainly in the liver.

The protein localises to the secreted. In terms of biological role, calcium-dependent lectin involved in innate immune defense. Binds mannose, fucose and N-acetylglucosamine on different microorganisms and activates the lectin complement pathway. Binds to late apoptotic cells, as well as to apoptotic blebs and to necrotic cells, but not to early apoptotic cells, facilitating their uptake by macrophages. May bind DNA. Upon SARS coronavirus-2/SARS-CoV-2 infection, activates the complement lectin pathway which leads to the inhibition SARS-CoV-2 infection and a reduction of the induced inflammatory response. The polypeptide is Mannose-binding protein C (Homo sapiens (Human)).